A 467-amino-acid polypeptide reads, in one-letter code: 26S proteasome regulatory subunit 7 homolog (467 aa).

2 disordered regions span residues 1–26 (MPPKEDWEKYKAPLEDDDKKPDDDKI) and 108–140 (GNGESDETTTDNNNSGNSNSNSNQQSTDADEDD). The segment covering 117-134 (TDNNNSGNSNSNSNQQST) has biased composition (low complexity). Phosphoserine is present on residues Ser-164 and Ser-231. ATP is bound at residue 250–257 (GPPGTGKT).

This sequence belongs to the AAA ATPase family. As to quaternary structure, interacts with UBR1 and CIC1. In terms of processing, the N-terminus is blocked.

The protein localises to the cytoplasm. It localises to the nucleus. Functionally, the 26S proteasome is involved in the ATP-dependent degradation of ubiquitinated proteins. The regulatory (or ATPase) complex confers ATP dependency and substrate specificity to the 26S complex. The chain is 26S proteasome regulatory subunit 7 homolog (RPT1) from Saccharomyces cerevisiae (strain ATCC 204508 / S288c) (Baker's yeast).